Consider the following 430-residue polypeptide: Adenylosuccinate synthetase (430 aa).

GTP is bound by residues 12–18 (GDEGKGK) and 40–42 (GHT). The Proton acceptor role is filled by D13. 2 residues coordinate Mg(2+): D13 and G40. IMP is bound by residues 13–16 (DEGK), 38–41 (NAGH), T130, R144, Q224, T239, and R303. Catalysis depends on H41, which acts as the Proton donor. 299-305 (TVTGRKR) contacts substrate. GTP contacts are provided by residues R305, 331-333 (KLD), and 413-415 (STS).

The protein belongs to the adenylosuccinate synthetase family. As to quaternary structure, homodimer. The cofactor is Mg(2+).

Its subcellular location is the cytoplasm. The enzyme catalyses IMP + L-aspartate + GTP = N(6)-(1,2-dicarboxyethyl)-AMP + GDP + phosphate + 2 H(+). Its pathway is purine metabolism; AMP biosynthesis via de novo pathway; AMP from IMP: step 1/2. Functionally, plays an important role in the de novo pathway of purine nucleotide biosynthesis. Catalyzes the first committed step in the biosynthesis of AMP from IMP. This is Adenylosuccinate synthetase from Methylorubrum extorquens (strain CM4 / NCIMB 13688) (Methylobacterium extorquens).